The following is a 278-amino-acid chain: D-arabinitol 2-dehydrogenase [ribulose-forming] (278 aa).

Positions 28 and 49 each coordinate NADP(+). The active-site Proton donor is serine 166. NADP(+) is bound by residues tyrosine 181, lysine 185, isoleucine 214, and threonine 216. Catalysis depends on tyrosine 181, which acts as the Proton acceptor. Lysine 185 serves as the catalytic Lowers pKa of active site Tyr.

Belongs to the short-chain dehydrogenases/reductases (SDR) family.

It carries out the reaction D-arabinitol + NAD(+) = D-ribulose + NADH + H(+). Its pathway is carbohydrate metabolism; D-arabinitol metabolism. The chain is D-arabinitol 2-dehydrogenase [ribulose-forming] (ARDH) from Scheffersomyces stipitis (strain ATCC 58785 / CBS 6054 / NBRC 10063 / NRRL Y-11545) (Yeast).